Reading from the N-terminus, the 1395-residue chain is G2/mitotic-specific cyclin-B3 (1395 aa).

Residues 1-59 (MLLPLPPQSSKPVPKKSQSSKIVPSHHDPSEKTGENCQTKISPSSLQESPSSLQGALKK) form a disordered region. Residues 10–23 (SKPVPKKSQSSKIV) are compositionally biased toward low complexity. The span at 25-34 (SHHDPSEKTG) shows a compositional bias: basic and acidic residues. Positions 42 to 54 (SPSSLQESPSSLQ) are enriched in low complexity. A D-box motif is present at residues 60–68 (RSAFEDLTN). Disordered regions lie at residues 418–464 (LSIK…PTEE) and 1074–1122 (ATMT…DSSD). Positions 419–431 (SIKEKPSTEKESF) are enriched in basic and acidic residues. Over residues 1082–1093 (SRTTTESSACES) the composition is skewed to low complexity.

The protein belongs to the cyclin family. Cyclin AB subfamily. In terms of assembly, interacts with CDK2 kinase. Post-translationally, ubiquitinated. Ubiquitination leads to its degradation during anaphase entry, after degradation of CCNB1. In terms of tissue distribution, testis specific. In testis, it is expressed in developing germ cells, but not in Leydig cells. Weakly or not expressed in other tissues.

The protein localises to the nucleus. Cyclins are positive regulatory subunits of the cyclin-dependent kinases (CDKs), and thereby play an essential role in the control of the cell cycle, notably via their destruction during cell division. Its tissue specificity suggest that it may be required during early meiotic prophase I. The polypeptide is G2/mitotic-specific cyclin-B3 (CCNB3) (Homo sapiens (Human)).